The following is a 216-amino-acid chain: Chloramphenicol acetyltransferase (216 aa).

H189 functions as the Proton acceptor in the catalytic mechanism.

This sequence belongs to the chloramphenicol acetyltransferase family. As to quaternary structure, homotrimer.

The catalysed reaction is chloramphenicol + acetyl-CoA = chloramphenicol 3-acetate + CoA. This enzyme is an effector of chloramphenicol resistance in bacteria. The protein is Chloramphenicol acetyltransferase (cat) of Staphylococcus aureus.